We begin with the raw amino-acid sequence, 475 residues long: Argininosuccinate lyase (475 aa).

Belongs to the lyase 1 family. Argininosuccinate lyase subfamily.

The protein resides in the cytoplasm. The enzyme catalyses 2-(N(omega)-L-arginino)succinate = fumarate + L-arginine. Its pathway is amino-acid biosynthesis; L-arginine biosynthesis; L-arginine from L-ornithine and carbamoyl phosphate: step 3/3. The polypeptide is Argininosuccinate lyase (Streptomyces coelicolor (strain ATCC BAA-471 / A3(2) / M145)).